Reading from the N-terminus, the 87-residue chain is Small ribosomal subunit protein bS20 (87 aa).

The disordered stretch occupies residues 1–22 (MANIKSQIKRNKTNEKARLRNQ).

Belongs to the bacterial ribosomal protein bS20 family.

Binds directly to 16S ribosomal RNA. This chain is Small ribosomal subunit protein bS20, found in Corynebacterium glutamicum (strain R).